The chain runs to 571 residues: Potassium-transporting ATPase potassium-binding subunit (571 aa).

12 helical membrane passes run 5–25, 60–80, 86–106, 131–151, 177–197, 247–267, 291–311, 334–354, 386–406, 425–445, 498–518, and 547–567; these read LAAG…YVPV, YGYA…LYAL, VLPL…NTAV, GLAV…VALI, ILLP…VIQS, PTPV…VSLT, LTLL…TLAA, FGIP…TGAV, GLYG…LLVG, ALSV…TVIL, ALGL…LALA, and GTVV…GPIA.

Belongs to the KdpA family. In terms of assembly, the system is composed of three essential subunits: KdpA, KdpB and KdpC.

Its subcellular location is the cell membrane. In terms of biological role, part of the high-affinity ATP-driven potassium transport (or Kdp) system, which catalyzes the hydrolysis of ATP coupled with the electrogenic transport of potassium into the cytoplasm. This subunit binds the extracellular potassium ions and delivers the ions to the membrane domain of KdpB through an intramembrane tunnel. The sequence is that of Potassium-transporting ATPase potassium-binding subunit from Rhodococcus jostii (strain RHA1).